The sequence spans 563 residues: MGSLSNYALLQLTLTAFLTILVQPQHLLAPVFRTLSILTNQSNCWLCEHLDNAEQPELVFVPASASTWWTYSGQWMYERVWYPQAEVQNHSTSSYRKVTWHWEASMEAQGLSFAQVRLLEGNFSLCVENKNGSGPFLGNIPKQYCNQILWFDSTDGTFMPSIDVTNESRNDDDDTSVCLGTRQCSWFAGCTNRTWNSSAVPLIGLPNTQDYKWVDRNSGLTWSGNDTCLYSCQNQTKGLLYQLFRNLFCSYGLTEAHGKWRCADASITNDKGHDGHRTPTWWLTGSNLTLSVNNSGLFFLCGNGVYKGFPPKWSGRCGLGYLVPSLTRYLTLNASQITNLRSFIHKVTPHRCTQGDTDNPPLYCNPKDNSTIRALFPSLGTYDLEKAILNISKAMEQEFSATKQTLEAHQSKVSSLASASRKDHVLDIPTTQRQTACGTVGKQCCLYINYSEEIKSNIQRLHEASENLKNVPLLDWQGIFAKVGDWFRSWGYVLLIVLFCLFIFVLIYVRVFRKSRRSLNSQPLNLALSPQQSAQLLVSETSCQVSNRAMKGLTTHQYDTSLL.

The signal sequence occupies residues methionine 1 to histidine 26. Residues leucine 27 to arginine 488 are Extracellular-facing. Residues asparagine 122 and asparagine 192 are each glycosylated (N-linked (GlcNAc...) asparagine). Residues serine 489 to valine 509 form a helical membrane-spanning segment. The Cytoplasmic segment spans residues arginine 510 to leucine 563.

Belongs to the gamma type-C retroviral envelope protein family. N-glycosylated. In terms of processing, cleaved by some metalloproteinase at 432-Gln-Arg-433 (mainly) or 433-Arg-Gln-434, leading to release the secreted form (Endogenous retroviral envelope protein HEMO, secreted form) in the extracellular medium. As to expression, expressed at high level in the placenta and stem cells (at protein level). Also expressed in the kidney but at a lower level. Endogenous retroviral envelope protein HEMO, secreted form: Present in the blood of pregnant women (at protein level).

Its subcellular location is the cell membrane. The protein resides in the secreted. Its function is as follows. Endogenous envelope proteins originate from retroviral envelope proteins, which mediate receptor recognition and membrane fusion during early infection. Endogenous envelope proteins may have kept, lost or modified their original function during evolution. The polypeptide is Endogenous retroviral envelope protein HEMO (Homo sapiens (Human)).